The following is a 35-amino-acid chain: MQSYNVFPALVIITTLVVPFMAAAALLFIIERDPS.

Residues 10 to 30 (LVIITTLVVPFMAAAALLFII) traverse the membrane as a helical segment.

As to quaternary structure, the G.violaceus PSI reaction center is composed of one copy each of PsaA,B,C,D,E,F,L,M and Z, and forms trimeric complexes.

The protein resides in the cell inner membrane. This chain is Photosystem I reaction center subunit Z (psaZ), found in Gloeobacter violaceus (strain ATCC 29082 / PCC 7421).